A 205-amino-acid chain; its full sequence is MIGRLRGIVLEKQPPLVLLETNGVGYEVHMPMTCFYELPDAGQEAVLFTHFVVREDAQLLYGFNDKQERALFRELIKVNGVGPKLALAILSGMSAQQFVSAIEREAIVSLVKLPGVGKKTAERLVVEMKDRFKGLNGDLFNQSSDINLPATAKQTTSDADSEAEAAAALVSLGYKPQEASRMVSKIAKPGADCETLIREALRAVL.

The segment at methionine 1–asparagine 64 is domain I. The interval aspartate 65–serine 143 is domain II. A flexible linker region spans residues serine 144 to threonine 156. Residues serine 157 to leucine 205 are domain III.

The protein belongs to the RuvA family. Homotetramer. Forms an RuvA(8)-RuvB(12)-Holliday junction (HJ) complex. HJ DNA is sandwiched between 2 RuvA tetramers; dsDNA enters through RuvA and exits via RuvB. An RuvB hexamer assembles on each DNA strand where it exits the tetramer. Each RuvB hexamer is contacted by two RuvA subunits (via domain III) on 2 adjacent RuvB subunits; this complex drives branch migration. In the full resolvosome a probable DNA-RuvA(4)-RuvB(12)-RuvC(2) complex forms which resolves the HJ.

It is found in the cytoplasm. Functionally, the RuvA-RuvB-RuvC complex processes Holliday junction (HJ) DNA during genetic recombination and DNA repair, while the RuvA-RuvB complex plays an important role in the rescue of blocked DNA replication forks via replication fork reversal (RFR). RuvA specifically binds to HJ cruciform DNA, conferring on it an open structure. The RuvB hexamer acts as an ATP-dependent pump, pulling dsDNA into and through the RuvAB complex. HJ branch migration allows RuvC to scan DNA until it finds its consensus sequence, where it cleaves and resolves the cruciform DNA. The protein is Holliday junction branch migration complex subunit RuvA of Photorhabdus laumondii subsp. laumondii (strain DSM 15139 / CIP 105565 / TT01) (Photorhabdus luminescens subsp. laumondii).